A 156-amino-acid chain; its full sequence is Small ribosomal subunit protein uS7 (156 aa).

The protein belongs to the universal ribosomal protein uS7 family. In terms of assembly, part of the 30S ribosomal subunit. Contacts proteins S9 and S11.

One of the primary rRNA binding proteins, it binds directly to 16S rRNA where it nucleates assembly of the head domain of the 30S subunit. Is located at the subunit interface close to the decoding center, probably blocks exit of the E-site tRNA. The chain is Small ribosomal subunit protein uS7 from Enterobacter sp. (strain 638).